A 238-amino-acid polypeptide reads, in one-letter code: NADH-quinone oxidoreductase subunit C (238 aa).

Positions 1 to 11 are enriched in polar residues; that stretch reads MSTSNGSANGT. The segment at 1 to 20 is disordered; the sequence is MSTSNGSANGTNGVGLPRGD.

This sequence belongs to the complex I 30 kDa subunit family. NDH-1 is composed of 14 different subunits. Subunits NuoB, C, D, E, F, and G constitute the peripheral sector of the complex.

It localises to the cell membrane. It carries out the reaction a quinone + NADH + 5 H(+)(in) = a quinol + NAD(+) + 4 H(+)(out). Functionally, NDH-1 shuttles electrons from NADH, via FMN and iron-sulfur (Fe-S) centers, to quinones in the respiratory chain. The immediate electron acceptor for the enzyme in this species is believed to be a menaquinone. Couples the redox reaction to proton translocation (for every two electrons transferred, four hydrogen ions are translocated across the cytoplasmic membrane), and thus conserves the redox energy in a proton gradient. This Mycolicibacterium smegmatis (strain ATCC 700084 / mc(2)155) (Mycobacterium smegmatis) protein is NADH-quinone oxidoreductase subunit C.